We begin with the raw amino-acid sequence, 71 residues long: UPF0346 protein SSU05_1322 (71 aa).

It belongs to the UPF0346 family.

The sequence is that of UPF0346 protein SSU05_1322 from Streptococcus suis (strain 05ZYH33).